Reading from the N-terminus, the 166-residue chain is Endoribonuclease YbeY (166 aa).

Positions 131, 135, and 141 each coordinate Zn(2+).

The protein belongs to the endoribonuclease YbeY family. The cofactor is Zn(2+).

It is found in the cytoplasm. Functionally, single strand-specific metallo-endoribonuclease involved in late-stage 70S ribosome quality control and in maturation of the 3' terminus of the 16S rRNA. The sequence is that of Endoribonuclease YbeY from Dehalococcoides mccartyi (strain CBDB1).